Consider the following 99-residue polypeptide: UPF0213 protein spr1390 (99 aa).

The 76-residue stretch at 3–78 (HKAYMYVLEC…KRKKRPQKEE (76 aa)) folds into the GIY-YIG domain.

This sequence belongs to the UPF0213 family.

The polypeptide is UPF0213 protein spr1390 (Streptococcus pneumoniae (strain ATCC BAA-255 / R6)).